The chain runs to 101 residues: MKPNFSKGLIPAIVIEEGTKDVLMLAYMNEEAYKKTLETKRTWFYSRSRQSLWNKGETSGNVQYVQSLYLDCDQDSIVVNVKQVGPACHTGEKTCFYYQII.

Asp-71 is a binding site for Mg(2+). Zn(2+) is bound at residue Cys-72. Positions 73 and 75 each coordinate Mg(2+). Zn(2+) is bound by residues Cys-88 and Cys-95.

This sequence belongs to the PRA-CH family. Homodimer. Mg(2+) is required as a cofactor. Requires Zn(2+) as cofactor.

It localises to the cytoplasm. It carries out the reaction 1-(5-phospho-beta-D-ribosyl)-5'-AMP + H2O = 1-(5-phospho-beta-D-ribosyl)-5-[(5-phospho-beta-D-ribosylamino)methylideneamino]imidazole-4-carboxamide. The protein operates within amino-acid biosynthesis; L-histidine biosynthesis; L-histidine from 5-phospho-alpha-D-ribose 1-diphosphate: step 3/9. Its function is as follows. Catalyzes the hydrolysis of the adenine ring of phosphoribosyl-AMP. The protein is Phosphoribosyl-AMP cyclohydrolase of Bacillus cereus (strain ATCC 14579 / DSM 31 / CCUG 7414 / JCM 2152 / NBRC 15305 / NCIMB 9373 / NCTC 2599 / NRRL B-3711).